Here is a 178-residue protein sequence, read N- to C-terminus: CCHC-type zinc finger nucleic acid binding protein (178 aa).

Ser-2 bears the N-acetylserine mark. The CCHC-type 1 zinc finger occupies 4–21 (NECFKCGRSGHWARECPT). The residue at position 8 (Lys-8) is an N6-acetyllysine. Omega-N-methylarginine; by PRMT1 occurs at positions 25 and 27. Residues 25–38 (RGRGMRSRGRGGFT) form an RNA-binding Arg/Gly-rich region (RGG-box) region. Omega-N-methylarginine occurs at positions 32 and 34. Ser-49 is modified (phosphoserine). 6 consecutive CCHC-type zinc fingers follow at residues 52–69 (DICY…DCDL), 72–90 (DEAC…DCKE), 97–114 (QCCY…DCDH), 118–135 (QKCY…DCTK), 136–153 (VKCY…NCSK), and 157–174 (VNCY…ECTI). Omega-N-methylarginine occurs at positions 72, 79, and 80.

As to quaternary structure, associates with the 40S ribosomal subunit, the 80S ribosome and with polysomes. In terms of processing, arginine methylation by PRMT1 in the Arg/Gly-rich region impedes RNA binding.

The protein resides in the nucleus. The protein localises to the cytoplasm. Its subcellular location is the endoplasmic reticulum. Its function is as follows. Single-stranded DNA-binding protein that preferentially binds to the sterol regulatory element (SRE) sequence 5'-GTGCGGTG-3', and thereby mediates transcriptional repression. Has a role as transactivator of the Myc promoter. Binds single-stranded RNA in a sequence-specific manner. Binds G-rich elements in target mRNA coding sequences. Prevents G-quadruplex structure formation in vitro, suggesting a role in supporting translation by resolving stable structures on mRNAs. In Mus musculus (Mouse), this protein is CCHC-type zinc finger nucleic acid binding protein.